A 292-amino-acid chain; its full sequence is Tissue factor (292 aa).

The signal sequence occupies residues 1-32 (MAPPTRLQVPRPGTAVPYTVLLGWLLAQVARA). The Extracellular segment spans residues 33–250 (ADTTGRAYNL…SREQGRAREM (218 aa)). Fibronectin type-III domains are found at residues 35–126 (TTGR…PFRN) and 148–240 (QVGT…TECT). N-linked (GlcNAc...) asparagine glycosylation occurs at Asn-41. Short sequence motifs (WKS motif) lie at residues 44-46 (WKS) and 75-77 (WKS). Cys-79 and Cys-87 are oxidised to a cystine. 4 N-linked (GlcNAc...) asparagine glycosylation sites follow: Asn-114, Asn-154, Asn-167, and Asn-182. A disulfide bond links Cys-216 and Cys-239. A helical transmembrane segment spans residues 251 to 271 (FFIIGAVVVVALLIIVLSVTV). At 272–292 (YKCRKARAGPSGKESSPLNIA) the chain is on the cytoplasmic side. Cys-274 carries S-palmitoyl cysteine lipidation.

Belongs to the tissue factor family. In terms of assembly, interacts with HSPE; the interaction, inhibited by heparin, promotes the generation of activated factor X and activates coagulation in the presence of activated factor VII. In terms of tissue distribution, brain, heart.

The protein localises to the membrane. Functionally, initiates blood coagulation by forming a complex with circulating factor VII or VIIa. The [TF:VIIa] complex activates factors IX or X by specific limited proteolysis. TF plays a role in normal hemostasis by initiating the cell-surface assembly and propagation of the coagulation protease cascade. This Oryctolagus cuniculus (Rabbit) protein is Tissue factor (F3).